The chain runs to 1048 residues: MNQNEHPFAFPETKLPLTSNQNWQLSTQRQRTEKKSITNFTYQEFDYENISRDTLERCLTTIIKHHPIFGAKLSDDFYLHFPSKTHIETFAVNDLSNALKQDIDKQLADTRSAVTKSRSQAIISIMFSILPKNIIRLHVRFNSVVVDNPSVTLFFEQLTQLLSGSPLSFLNQEQTISAYNHKVNNELLSVDLESARWNEYILTLPSSANLPTICEPEKLDETDITRRCITLSQRKWQQLVTVSKKHNVTPEITLASIFSTVLSLWGHQKYLMMRFDITKINDYTGIIGQFTEPLLVGMSGFEQSFLSLVKNNQKKFEEAYHYDVKVPVFQCVNKLSNISDSHRYPANITFSSELLNTNHSKKAVWGCRQSANTWLSLHAVIEQEQLVLQWDSQDAIFPKDMIKDMLHSYTDLLDLLSQKDVNWAQPLPTLLPKHQESIRNKINQQGDLELTKELLHQRFFKNVESTPNALAIIHGQESLDYITLASYAKSCAGALTEAGVKSGDRVAVTMNKGIGQIVAVLGILYAGAIYVPVSLDQPQERRESIYQGAGINVILINESDSKNSPSNDLFFFLDWQTAIKSEPMRSPQDVAPSQPAYIIYTSGSTGTPKGVVISHQGALNTCIAINRRYQIGKNDRVLALSALHFDLSVYDIFGLLSAGGTIVLVSELERRDPIAWCQAIEEHNVTMWNSVPALFDMLLTYATCFNSIAPSKLRLTMLSGDWIGLDLPQRYRNYRVDGQFIAMGGATEASIWSNVFDVEKVPMEWRSIPYGYPLPRQQYRVVDDLGRDCPDWVAGELWIGGDGIALGYFDDELKTQAQFLHIDGHAWYRTGDMGCYWPDGTLEFLGRRDKQVKVGGYRIELGEIEVALNNIPGVQRAVAIAVGNKDKTLAAFIVMDSEQAPIVTAPLDAEEVQLLLNKQLPNYMVPKRIIFLETFPLTANGKVDHKALTRMTNREKKTSQSINKPIITASEDRVAKIWNDVLGPTELYKSSDFFLSGGDAYNAIEVVKRCHKAGYLIKLSMLYRYSTIEAFAIIMDRCRLAPQEEAEL.

One can recognise a Carrier domain in the interval 965-1039; the sequence is PIITASEDRV…AFAIIMDRCR (75 aa).

Belongs to the ATP-dependent AMP-binding enzyme family.

It participates in siderophore biosynthesis; anguibactin biosynthesis. In terms of biological role, bifunctional protein that plays an essential role in virulence. Plays a role in both production of the siderophore anguibactin and regulation of iron transport genes. The polypeptide is Anguibactin system regulator (angR) (Vibrio anguillarum (strain ATCC 68554 / 775) (Listonella anguillarum)).